The sequence spans 275 residues: Large ribosomal subunit protein uL2c (275 aa).

The interval valine 224–histidine 263 is disordered.

It belongs to the universal ribosomal protein uL2 family. As to quaternary structure, part of the 50S ribosomal subunit.

The protein resides in the plastid. The protein localises to the chloroplast. This Chaetosphaeridium globosum (Charophycean green alga) protein is Large ribosomal subunit protein uL2c (rpl2).